The sequence spans 372 residues: Putative glutamate--cysteine ligase 2 (372 aa).

This sequence belongs to the glutamate--cysteine ligase type 2 family. YbdK subfamily. Homodimer.

The enzyme catalyses L-cysteine + L-glutamate + ATP = gamma-L-glutamyl-L-cysteine + ADP + phosphate + H(+). Its function is as follows. ATP-dependent carboxylate-amine ligase which exhibits weak glutamate--cysteine ligase activity. This chain is Putative glutamate--cysteine ligase 2 (ybdK), found in Escherichia coli (strain K12 / MC4100 / BW2952).